The chain runs to 231 residues: Ion-translocating oxidoreductase complex subunit E (231 aa).

The next 6 helical transmembrane spans lie at alanine 18–alanine 38, leucine 39–leucine 59, threonine 63–valine 83, leucine 86–valine 106, alanine 125–leucine 145, and proline 182–glycine 202.

This sequence belongs to the NqrDE/RnfAE family. The complex is composed of six subunits: RsxA, RsxB, RsxC, RsxD, RsxE and RsxG.

It is found in the cell inner membrane. Its function is as follows. Part of a membrane-bound complex that couples electron transfer with translocation of ions across the membrane. Required to maintain the reduced state of SoxR. The sequence is that of Ion-translocating oxidoreductase complex subunit E from Escherichia coli O6:H1 (strain CFT073 / ATCC 700928 / UPEC).